Here is a 268-residue protein sequence, read N- to C-terminus: MPKSFRHLVQALACLALLASASLQAQESRLDRILESGVLRVATTGDYKPFSYRTEEGGYAGFDVDMAQRLAESLGAKLVVVPTSWPNLMRDFADDRFDIAMSGISINLERQRQAYFSIPYLRDGKTPITLCSEEARFQTLEQIDQPGVTAIVNPGGTNEKFARANLKKARILVHPDNVTIFQQIVDGKADLMMTDAIEARLQSRLHPELCAVHPQQPFDFAEKAYLLPRDEAFKRYVDQWLHIAEQSGLLRQRMEHWLEYRWPTAHGK.

Residues 1–25 (MPKSFRHLVQALACLALLASASLQA) form the signal peptide.

This sequence belongs to the bacterial solute-binding protein 3 family. In terms of assembly, homodimer.

It is found in the periplasm. It carries out the reaction prephenate + H(+) = 3-phenylpyruvate + CO2 + H2O. The catalysed reaction is L-arogenate + H(+) = L-phenylalanine + CO2 + H2O. It functions in the pathway amino-acid biosynthesis; L-phenylalanine biosynthesis; L-phenylalanine from L-arogenate: step 1/1. It participates in amino-acid biosynthesis; L-phenylalanine biosynthesis; phenylpyruvate from prephenate: step 1/1. Forms alternative pathway for phenylalanine biosynthesis. Can catalyze two reactions: prephenate dehydratase and arogenate dehydratase. May have a role in chemotaxis or transport. This is Cyclohexadienyl dehydratase (pheC) from Pseudomonas aeruginosa (strain ATCC 15692 / DSM 22644 / CIP 104116 / JCM 14847 / LMG 12228 / 1C / PRS 101 / PAO1).